The sequence spans 276 residues: Secretagogin (276 aa).

EF-hand domains are found at residues Leu12–Lys47, Asn58–Asn93, Asp105–His140, Lys149–Phe184, Glu197–Leu232, and Val240–Pro276. Ca(2+) is bound by residues Asp25, Asp27, Tyr31, Glu36, Asp71, Ser73, Asp75, Arg77, Glu82, Asp118, Asp120, Ser122, Glu129, Asp162, Asn164, Asp166, Arg168, Asp173, Asp210, Ser212, Thr214, Glu221, Asp254, Asn256, Asp258, Lys260, and Glu265.

Expressed at high levels in the pancreatic islets of Langerhans and to a much lesser extent in the gastrointestinal tract (stomach, small intestine and colon), the adrenal medulla and cortex and the thyroid C-cells. In the brain, the expression is restricted to distinct subtypes of neurons with highest expression in the molecular layer of the cerebellum (stellate and basket cells), in the anterior part of the pituitary gland, in the thalamus, in the hypothalamus and in a subgroup of neocortical neurons.

It localises to the cytoplasm. The protein localises to the secreted. The protein resides in the cytoplasmic vesicle. Its subcellular location is the secretory vesicle membrane. The chain is Secretagogin (SCGN) from Homo sapiens (Human).